Reading from the N-terminus, the 89-residue chain is Small ribosomal subunit protein bS16 (89 aa).

Belongs to the bacterial ribosomal protein bS16 family.

The polypeptide is Small ribosomal subunit protein bS16 (Nitrosomonas europaea (strain ATCC 19718 / CIP 103999 / KCTC 2705 / NBRC 14298)).